Here is a 644-residue protein sequence, read N- to C-terminus: Chaperone protein DnaK (644 aa).

Threonine 199 carries the post-translational modification Phosphothreonine; by autocatalysis. A compositionally biased stretch (basic and acidic residues) spans 550 to 584; it reads ADKLDESEKQRAQDEIKRGREAMESGDLERMKASR. Disordered regions lie at residues 550-586 and 599-644; these read ADKL…SRDS and YSQA…EDKK. Residues 600–623 are compositionally biased toward low complexity; the sequence is SQAGPEQGAPGAEAGAGASQGASG.

The protein belongs to the heat shock protein 70 family.

Acts as a chaperone. This is Chaperone protein DnaK from Leptospira biflexa serovar Patoc (strain Patoc 1 / Ames).